A 729-amino-acid polypeptide reads, in one-letter code: Disintegrin and metalloproteinase domain-containing protein 21 (729 aa).

An N-terminal signal peptide occupies residues 1–39 (MECFIMLGADARTLMRVTLLLLWLKALPSLIDLSQTGST). The propeptide occupies 40–209 (QYLSSPEVVI…MKQNYGKLWP (170 aa)). The N-linked (GlcNAc...) asparagine glycan is linked to N169. Positions 176 to 183 (MLCSLTEK) match the Cysteine switch motif. C178 contributes to the Zn(2+) binding site. Residues 210-685 (HMWFLELAVV…DSGPTSQKRR (476 aa)) lie on the Extracellular side of the membrane. The Peptidase M12B domain occupies 212 to 402 (WFLELAVVVD…NQGTCLYNHP (191 aa)). N-linked (GlcNAc...) asparagine glycosylation occurs at N231. 3 disulfide bridges follow: C320–C397, C360–C382, and C362–C367. A Zn(2+)-binding site is contributed by H345. E346 is a catalytic residue. Positions 349 and 355 each coordinate Zn(2+). Residues N381, N441, and N482 are each glycosylated (N-linked (GlcNAc...) asparagine). One can recognise a Disintegrin domain in the interval 410-496 (VKRCGNGMVE…QCPEDGYVQD (87 aa)). Intrachain disulfides connect C468–C488, C638–C649, C643–C655, and C657–C666. Residues 638 to 667 (CLPETCNRKGVCNNKHHCHCDYGWSPPFCL) enclose the EGF-like domain. The chain crosses the membrane as a helical span at residues 686–706 (VIITVLSITVPVLSILICLLI). Topologically, residues 707–729 (AGLYRIYCKIPSGPKETKASSPG) are cytoplasmic.

It depends on Zn(2+) as a cofactor. Has no obvious cleavage site for furin endopeptidase, suggesting that the proteolytic processing is regulated. Highly expressed in Leydig cells. Expressed also in cauda epididymidis, vas deferens, convoluted tubules, kidney and the parietal cells of stomach. Not detected on developing spermatocytes or mature sperm.

It is found in the membrane. Functionally, may be involved in sperm maturation and/or fertilization. May also be involved in epithelia functions associated with establishing and maintaining gradients of ions or nutrients. This is Disintegrin and metalloproteinase domain-containing protein 21 (Adam21) from Mus musculus (Mouse).